The following is a 635-amino-acid chain: Glutamine sensor PIB2 (635 aa).

The interval 1 to 110 is disordered; sequence MTALHSVSKT…GTGFVDRKQQ (110 aa). Positions 1 to 164 are may play a role in attenuating TORC1 signaling; it reads MTALHSVSKT…KTLPFTDDQR (164 aa). The span at 33-44 shows a compositional bias: basic and acidic residues; that stretch reads RNHDYRGRKGDE. A phosphoserine mark is found at S46 and S53. Phosphothreonine is present on T56. Over residues 67–85 the composition is skewed to polar residues; sequence STHSEQSILSSISLKSMVN. S73, S113, S124, S148, S165, and S174 each carry phosphoserine. 2 disordered regions span residues 123–181 and 224–254; these read NSAE…VSRG and SSNLRLSKENKAKESSSSSTSSVSSSSTSKV. A compositionally biased stretch (low complexity) spans 238 to 254; it reads SSSSSTSSVSSSSTSKV. Phosphoserine is present on residues S300, S309, and S381. The required for interaction with TORC1 stretch occupies residues 304-440; the sequence is LPQPASSTNL…PTISNRNSAR (137 aa). The segment at 452–527 adopts an FYVE-type; atypical zinc-finger fold; that stretch reads DSKRNSCRYC…ICDDCLVEYE (76 aa). Residues C458, C461, C474, C477, C482, H485, C519, and C522 each coordinate Zn(2+). Disordered stretches follow at residues 534-557 and 570-623; these read HNANTNEDNINVEEGEDDDNDNRK and ALFR…GSVI. 2 stretches are compositionally biased toward acidic residues: residues 543–553 and 601–616; these read INVEEGEDDDN and EEADNENTGGEQEEGN. Residues 620–635 form a may be required for TORC1 activation region; the sequence is GSVIGSVPANWNWSSF.

Interacts with the TORC1 complex when activated by glutamine or cysteine. Interacts with TOR1; glutamine enhances the interaction. Interacts with KOG1; glutamine enhances the interaction. Interacts with TCO89. Interacts with LST8; glutamine enhances the interaction. Interacts with TOR2; glutamine enhances the interaction.

The protein resides in the vacuole membrane. With respect to regulation, activated by glutamine. May also be activated by cysteine. In terms of biological role, functions as an intracellular glutamine sensor that directly activates the TORC1 signaling pathway, to promote cell growth when glutamine is available. May play a role in repressing NPR1 activity independently of TORC1 signaling. The polypeptide is Glutamine sensor PIB2 (Saccharomyces cerevisiae (strain ATCC 204508 / S288c) (Baker's yeast)).